The chain runs to 460 residues: Zinc transporter 6 (460 aa).

Residues 1–33 (MGTIHLFRKSQRSLVGKLTHEFRLVAADRRSWK) are Cytoplasmic-facing. Residues 34–54 (ILLFGAINLICIGFLLMWCSS) form a helical membrane-spanning segment. Residues 55–64 (TNSIALTAYT) are Extracellular-facing. Residues 65–85 (YLTIFDLFSLITCLISYWVMV) traverse the membrane as a helical segment. At 86–98 (KKPSPVYSFGFER) the chain is on the cytoplasmic side. Residues 99-119 (FEVLAVFASTVLAQLGALFIL) form a helical membrane-spanning segment. The Extracellular segment spans residues 120-134 (KESAERFLEQPEIHT). Residues 135 to 155 (GRLLVGTFVALFFNLFTMLSV) form a helical membrane-spanning segment. The Cytoplasmic segment spans residues 156 to 200 (RNKPFAYVSEAASTSWLQEHVADLSRSICGIIPGLSSIFLPRMNP). A helical membrane pass occupies residues 201–221 (FVLIDIAGALALCITYMLIEI). The Extracellular portion of the chain corresponds to 222–228 (NNYYAVD). Residues 229 to 249 (TASAIAIALMTFGTMYPMSVY) traverse the membrane as a helical segment. Residues 250–460 (SGKVLLQTTP…GTNTRGQSRP (211 aa)) lie on the Cytoplasmic side of the membrane. Residues 372-392 (PVTSTPAKPSSPPPEFSFNTP) are disordered.

The protein belongs to the cation diffusion facilitator (CDF) transporter (TC 2.A.4) family. SLC30A subfamily. In terms of assembly, heterodimer with SLC30A5; form a functional zinc ion transmembrane transporter.

Its subcellular location is the golgi apparatus. The protein resides in the trans-Golgi network membrane. Functionally, has probably no intrinsic transporter activity but together with SLC30A5 forms a functional zinc ion:proton antiporter heterodimer, mediating zinc entry into the lumen of organelles along the secretory pathway. As part of that zinc ion:proton antiporter, contributes to zinc ion homeostasis within the early secretory pathway and regulates the activation and folding of enzymes like alkaline phosphatases and enzymes involved in phosphatidylinositol glycan anchor biosynthesis. The sequence is that of Zinc transporter 6 (SLC30A6) from Gallus gallus (Chicken).